Here is a 60-residue protein sequence, read N- to C-terminus: Large ribosomal subunit protein bL33 (60 aa).

This sequence belongs to the bacterial ribosomal protein bL33 family.

This chain is Large ribosomal subunit protein bL33, found in Chlorobium chlorochromatii (strain CaD3).